Here is a 513-residue protein sequence, read N- to C-terminus: Mannosyl-oligosaccharide alpha-1,2-mannosidase 1B (513 aa).

The N-terminal stretch at 1-21 is a signal peptide; it reads MHLPSLSLSLTALAIASPSAA. Asparagine 97, asparagine 117, asparagine 150, asparagine 184, asparagine 251, asparagine 322, asparagine 348, and asparagine 368 each carry an N-linked (GlcNAc...) asparagine glycan. A disulfide bridge connects residues cysteine 334 and cysteine 363. Glutamate 377 functions as the Proton donor in the catalytic mechanism. Threonine 503 is a binding site for Ca(2+).

The protein belongs to the glycosyl hydrolase 47 family. As to quaternary structure, monomer. Requires Ca(2+) as cofactor. Mg(2+) is required as a cofactor.

The protein localises to the cytoplasmic vesicle lumen. The enzyme catalyses N(4)-(alpha-D-Man-(1-&gt;2)-alpha-D-Man-(1-&gt;2)-alpha-D-Man-(1-&gt;3)-[alpha-D-Man-(1-&gt;2)-alpha-D-Man-(1-&gt;3)-[alpha-D-Man-(1-&gt;2)-alpha-D-Man-(1-&gt;6)]-alpha-D-Man-(1-&gt;6)]-beta-D-Man-(1-&gt;4)-beta-D-GlcNAc-(1-&gt;4)-beta-D-GlcNAc)-L-asparaginyl-[protein] (N-glucan mannose isomer 9A1,2,3B1,2,3) + 4 H2O = N(4)-(alpha-D-Man-(1-&gt;3)-[alpha-D-Man-(1-&gt;3)-[alpha-D-Man-(1-&gt;6)]-alpha-D-Man-(1-&gt;6)]-beta-D-Man-(1-&gt;4)-beta-D-GlcNAc-(1-&gt;4)-beta-D-GlcNAc)-L-asparaginyl-[protein] (N-glucan mannose isomer 5A1,2) + 4 beta-D-mannose. It catalyses the reaction N(4)-(alpha-D-Man-(1-&gt;2)-alpha-D-Man-(1-&gt;2)-alpha-D-Man-(1-&gt;3)-[alpha-D-Man-(1-&gt;3)-[alpha-D-Man-(1-&gt;2)-alpha-D-Man-(1-&gt;6)]-alpha-D-Man-(1-&gt;6)]-beta-D-Man-(1-&gt;4)-beta-D-GlcNAc-(1-&gt;4)-beta-D-GlcNAc)-L-asparaginyl-[protein] (N-glucan mannose isomer 8A1,2,3B1,3) + 3 H2O = N(4)-(alpha-D-Man-(1-&gt;3)-[alpha-D-Man-(1-&gt;3)-[alpha-D-Man-(1-&gt;6)]-alpha-D-Man-(1-&gt;6)]-beta-D-Man-(1-&gt;4)-beta-D-GlcNAc-(1-&gt;4)-beta-D-GlcNAc)-L-asparaginyl-[protein] (N-glucan mannose isomer 5A1,2) + 3 beta-D-mannose. It functions in the pathway protein modification; protein glycosylation. Functionally, involved in the maturation of Asn-linked oligosaccharides. Progressively trims alpha-1,2-linked mannose residues from Man(9)GlcNAc(2) to produce Man(5)GlcNAc(2). In Aspergillus phoenicis (Aspergillus saitoi), this protein is Mannosyl-oligosaccharide alpha-1,2-mannosidase 1B (mns1B).